The primary structure comprises 191 residues: Thiol:disulfide interchange protein TxlA (191 aa).

Residues 14 to 30 form a helical membrane-spanning segment; the sequence is ILVIAAALVLTILVVLG. Residues 27 to 148 enclose the Thioredoxin domain; it reads VVLGSRQPSA…LAANLDALVE (122 aa). C69 and C72 are joined by a disulfide. The segment covering 165–185 has biased composition (polar residues); sequence SADLQPSRSSQTDPRSHSGQV. The interval 165 to 191 is disordered; the sequence is SADLQPSRSSQTDPRSHSGQVQDGVLD.

This sequence belongs to the thioredoxin family.

The protein resides in the cell membrane. Functionally, required for disulfide bond formation in some proteins. Acts by transferring its disulfide bond to other proteins and is reduced in the process. The sequence is that of Thiol:disulfide interchange protein TxlA (txlA) from Synechococcus elongatus (strain ATCC 33912 / PCC 7942 / FACHB-805) (Anacystis nidulans R2).